A 369-amino-acid polypeptide reads, in one-letter code: RNA pseudouridine synthase 5 (369 aa).

The S4 RNA-binding domain maps to 47-104 (APLLGWIQRIQNGQIQIDGEVVKDPNTLLRSGSKLVYSRLPWKEPDTPYSLEVLYEDD).

The protein belongs to the pseudouridine synthase RluA family.

It catalyses the reaction a uridine in RNA = a pseudouridine in RNA. The sequence is that of RNA pseudouridine synthase 5 from Arabidopsis thaliana (Mouse-ear cress).